Consider the following 191-residue polypeptide: Succinoglycan biosynthesis protein ExoI (191 aa).

The segment at 1–21 (MTRIKSAVAAGGRRAPHSARL) is disordered.

It functions in the pathway glycan metabolism; exopolysaccharide biosynthesis. The polypeptide is Succinoglycan biosynthesis protein ExoI (exoI) (Rhizobium meliloti (strain 1021) (Ensifer meliloti)).